Consider the following 579-residue polypeptide: Glucose starvation modulator protein 1 (579 aa).

The zn(2)-C6 fungal-type DNA-binding region spans 20-48 (CVFCHEKHLQCDLGRPCQNCSKRGIGDTC). The segment covering 43–53 (GIGDTCRDKER) has biased composition (basic and acidic residues). Disordered stretches follow at residues 43-75 (GIGD…STKS) and 319-342 (QMAS…GETV). Over residues 54-64 (KPRKRGPRKVK) the composition is skewed to basic residues. The span at 330 to 339 (NDTSPESQGG) shows a compositional bias: polar residues. Residues 444–516 (LLEYESMAKL…DIFHEYLAFG (73 aa)) form the PAS domain.

It belongs to the ERT1/acuK family.

It is found in the nucleus. Functionally, transcription factor which regulates nonfermentable carbon utilization. The polypeptide is Glucose starvation modulator protein 1 (GSM1) (Kluyveromyces lactis (strain ATCC 8585 / CBS 2359 / DSM 70799 / NBRC 1267 / NRRL Y-1140 / WM37) (Yeast)).